The primary structure comprises 157 residues: Probable calcium-binding protein CML15 (157 aa).

EF-hand domains lie at 3-38, 39-74, 78-113, and 114-149; these read DQIR…LGLK, PSGD…DLNE, INSE…MGQP, and LTYK…SAVD. Ca(2+) contacts are provided by D16, D18, D20, S22, E27, D52, N54, N56, E63, D91, D93, N95, E102, D127, N129, D131, and E138.

Potential calcium sensor. The chain is Probable calcium-binding protein CML15 (CML15) from Arabidopsis thaliana (Mouse-ear cress).